A 98-amino-acid chain; its full sequence is NADH-ubiquinone oxidoreductase chain 4L (98 aa).

3 helical membrane passes run 1 to 21 (MTHI…GLTF), 26 to 46 (LLSA…ALAM), and 59 to 79 (APLL…SLLV).

This sequence belongs to the complex I subunit 4L family.

It localises to the mitochondrion membrane. It carries out the reaction a ubiquinone + NADH + 5 H(+)(in) = a ubiquinol + NAD(+) + 4 H(+)(out). Functionally, core subunit of the mitochondrial membrane respiratory chain NADH dehydrogenase (Complex I) which catalyzes electron transfer from NADH through the respiratory chain, using ubiquinone as an electron acceptor. Part of the enzyme membrane arm which is embedded in the lipid bilayer and involved in proton translocation. The chain is NADH-ubiquinone oxidoreductase chain 4L (MT-ND4L) from Polypterus ornatipinnis (Ornate bichir).